Here is a 297-residue protein sequence, read N- to C-terminus: 4-hydroxy-tetrahydrodipicolinate synthase (297 aa).

T49 serves as a coordination point for pyruvate. Y137 functions as the Proton donor/acceptor in the catalytic mechanism. K165 acts as the Schiff-base intermediate with substrate in catalysis. Residue I208 coordinates pyruvate.

Belongs to the DapA family. In terms of assembly, homotetramer; dimer of dimers.

It localises to the cytoplasm. It carries out the reaction L-aspartate 4-semialdehyde + pyruvate = (2S,4S)-4-hydroxy-2,3,4,5-tetrahydrodipicolinate + H2O + H(+). The protein operates within amino-acid biosynthesis; L-lysine biosynthesis via DAP pathway; (S)-tetrahydrodipicolinate from L-aspartate: step 3/4. Its function is as follows. Catalyzes the condensation of (S)-aspartate-beta-semialdehyde [(S)-ASA] and pyruvate to 4-hydroxy-tetrahydrodipicolinate (HTPA). In Gluconacetobacter diazotrophicus (strain ATCC 49037 / DSM 5601 / CCUG 37298 / CIP 103539 / LMG 7603 / PAl5), this protein is 4-hydroxy-tetrahydrodipicolinate synthase.